The following is a 438-amino-acid chain: Glycerol-3-phosphate acyltransferase 3 (438 aa).

Residues 14–34 (WLTLVGGLILLPSAFGLSLGI) traverse the membrane as a helical segment. Phosphoserine is present on residues Ser-68 and Ser-77. Transmembrane regions (helical) follow at residues 137 to 157 (ISPRLTMVWVLGVLVRYCFLL) and 161 to 181 (VTLAFIGISLLIIGTTLVGQL). The short motif at 229–234 (HTSPID) is the HXXXXD motif element.

Belongs to the 1-acyl-sn-glycerol-3-phosphate acyltransferase family. As to expression, most abundant in epididymal fat, followed by small intestine, brown adipose tissue, kidney, heart and colon.

It localises to the endoplasmic reticulum membrane. The catalysed reaction is sn-glycerol 3-phosphate + an acyl-CoA = a 1-acyl-sn-glycero-3-phosphate + CoA. It carries out the reaction a 1-acyl-sn-glycero-3-phosphate + an acyl-CoA = a 1,2-diacyl-sn-glycero-3-phosphate + CoA. It catalyses the reaction dodecanoyl-CoA + sn-glycerol 3-phosphate = 1-dodecanoyl-sn-glycerol 3-phosphate + CoA. The enzyme catalyses sn-glycerol 3-phosphate + hexadecanoyl-CoA = 1-hexadecanoyl-sn-glycero-3-phosphate + CoA. The catalysed reaction is sn-glycerol 3-phosphate + (9Z)-octadecenoyl-CoA = 1-(9Z-octadecenoyl)-sn-glycero-3-phosphate + CoA. It carries out the reaction (9Z,12Z)-octadecadienoyl-CoA + sn-glycerol 3-phosphate = 1-(9Z,12Z)-octadecadienoyl-sn-glycero-3-phosphate + CoA. It catalyses the reaction 1-tetradecanoyl-sn-glycerol 3-phosphate + (9Z)-octadecenoyl-CoA = 1-tetradecanoyl-2-(9Z)-octadecenoyl-sn-glycero-3-phosphate + CoA. The enzyme catalyses 1-hexadecanoyl-sn-glycero-3-phosphate + (9Z)-octadecenoyl-CoA = 1-hexadecanoyl-2-(9Z-octadecenoyl)-sn-glycero-3-phosphate + CoA. The catalysed reaction is 1-(9Z-octadecenoyl)-sn-glycero-3-phosphate + (9Z)-octadecenoyl-CoA = 1,2-di-(9Z-octadecenoyl)-sn-glycero-3-phosphate + CoA. It carries out the reaction 1-(6Z,9Z,12Z-octadecatrienoyl)-sn-glycero-3-phosphate + (9Z)-octadecenoyl-CoA = (6Z,9Z,12Z)-octadecatrienoyl-2-(9Z)-octadecenoyl-sn-glycero-3-phosphate + CoA. It catalyses the reaction 1-(9Z,12Z,15Z)-octadecatrienoyl-sn-glycero-3-phosphate + (9Z)-octadecenoyl-CoA = 1-(9Z,12Z,15Z)-octadecatrienoyl-2-(9Z)-octadecenoyl-sn-glycero-3-phosphate + CoA. The enzyme catalyses 1-(9Z-octadecenoyl)-sn-glycero-3-phosphate + tetradecanoyl-CoA = 1-(9Z)-octadecenoyl-2-tetradecanoyl-sn-glycero-3-phosphate + CoA. The catalysed reaction is 1-(9Z-octadecenoyl)-sn-glycero-3-phosphate + hexadecanoyl-CoA = 1-(9Z)-octadecenoyl-2-hexadecanoyl-sn-glycero-3-phosphate + CoA. It carries out the reaction 1-(9Z-octadecenoyl)-sn-glycero-3-phosphate + octadecanoyl-CoA = 1-(9Z-octadecenoyl)-2-octadecanoyl-sn-glycero-3-phosphate + CoA. It catalyses the reaction 1-(9Z-octadecenoyl)-sn-glycero-3-phosphate + (9Z,12Z)-octadecadienoyl-CoA = 1-(9Z)-octadecenoyl-2-(9Z,12Z)-octadecadienoyl-sn-glycero-3-phosphate + CoA. The enzyme catalyses 1-(5Z,8Z,11Z,14Z-eicosatetraenoyl)-sn-glycero-3-phosphate + (9Z)-octadecenoyl-CoA = 1-(5Z,8Z,11Z,14Z)-eicosatetraenoyl-2-(9Z)-octadecenoyl-sn-glycero-3-phosphate + CoA. It functions in the pathway glycerolipid metabolism; triacylglycerol biosynthesis. It participates in phospholipid metabolism; CDP-diacylglycerol biosynthesis; CDP-diacylglycerol from sn-glycerol 3-phosphate: step 1/3. In terms of biological role, converts glycerol-3-phosphate to 1-acyl-sn-glycerol-3-phosphate (lysophosphatidic acid or LPA) by incorporating an acyl moiety at the sn-1 position of the glycerol backbone. Also converts LPA into 1,2-diacyl-sn-glycerol-3-phosphate (phosphatidic acid or PA) by incorporating an acyl moiety at the sn-2 position of the glycerol backbone. Protects cells against lipotoxicity. In Mus musculus (Mouse), this protein is Glycerol-3-phosphate acyltransferase 3.